Reading from the N-terminus, the 528-residue chain is Keratin, type II cytoskeletal 78 (528 aa).

Positions 1-104 (MSLSPCRARR…DPQFQVVRTQ (104 aa)) are head. Residues 23 to 45 (VGRGRTGFSSRSLSSFGGCRGGS) form a disordered region. Low complexity predominate over residues 24-39 (GRGRTGFSSRSLSSFG). The coil 1A stretch occupies residues 105 to 140 (ETQQIRVLNNQFASFIDKVRFLEQQNKVLETKWHLL). The IF rod domain maps to 105–418 (ETQQIRVLNN…RLLEGEECRM (314 aa)). Residues 141 to 159 (QQQGLSDRPQGLESFFEAY) are linker 1. A coil 1B region spans residues 160–252 (LVRLRTQLEE…LYEEELGQLQ (93 aa)). Positions 253 to 275 (TQASDMSVVLSMDNNRCLDFRDL) are linker 12. Residues 276–415 (IAEVRARYEE…TYRRLLEGEE (140 aa)) are coil 2. The interval 416–528 (CRMSGECASQ…ESSLKTSVTY (113 aa)) is tail.

It belongs to the intermediate filament family. As to quaternary structure, heterotetramer of two type I and two type II keratins.

This is Keratin, type II cytoskeletal 78 (KRT78) from Bos taurus (Bovine).